The sequence spans 833 residues: Phosphatidylinositol-3-phosphatase myotubularin-2 (833 aa).

Residues 42–109 (GSYSNLDCLL…VAIEKFNKLA (68 aa)) enclose the GRAM domain. Positions 181–647 (TNPKERLLNE…LAPTLWPQFH (467 aa)) constitute a Myotubularin phosphatase domain. Substrate-binding positions include 329-332 (NGAK), 354-355 (NI), 440-446 (CSDGWDR), and arginine 486. The Phosphocysteine intermediate role is filled by cysteine 440. The interval 503 to 530 (QSSSARSFPSSPVRQSPGSAAAQSSSSS) is disordered. Residues 504–530 (SSSARSFPSSPVRQSPGSAAAQSSSSS) are compositionally biased toward low complexity. Residues 660 to 717 (ETEDQCRAMTVKYSEMKKEKEEAERKVDELSSAMESLNEELLNERDISRAARESAKRA) are a coiled coil. Positions 753-772 (KCSHSIPQKQSEDNTTDVSE) are disordered.

This sequence belongs to the protein-tyrosine phosphatase family. Non-receptor class myotubularin subfamily. In terms of tissue distribution, mostly expressed in flowers and roots, and, to a lower extent, in siliques and leaves.

It is found in the cytoplasm. The enzyme catalyses a 1,2-diacyl-sn-glycero-3-phospho-(1D-myo-inositol-3-phosphate) + H2O = a 1,2-diacyl-sn-glycero-3-phospho-(1D-myo-inositol) + phosphate. The catalysed reaction is a 1,2-diacyl-sn-glycero-3-phospho-(1D-myo-inositol-3,5-bisphosphate) + H2O = a 1,2-diacyl-sn-glycero-3-phospho-(1D-myo-inositol-5-phosphate) + phosphate. Phosphatase with phosphoinositide 3'-phosphatase activity that can use phosphatidylinositol-3-phosphate (PtdIns3P) and phosphatidylinositol-3,5-diphosphate (PtdIns3,5P(2)) as substrates and produces phosphatidylinositol-5-phosphate (PtdIns5P); participates in pathway(s) that transfer gene regulatory signals to the nucleus. The sequence is that of Phosphatidylinositol-3-phosphatase myotubularin-2 (MTM2) from Arabidopsis thaliana (Mouse-ear cress).